The chain runs to 344 residues: Phosphate acyltransferase (344 aa).

It belongs to the PlsX family. In terms of assembly, homodimer. Probably interacts with PlsY.

It localises to the cytoplasm. The catalysed reaction is a fatty acyl-[ACP] + phosphate = an acyl phosphate + holo-[ACP]. Its pathway is lipid metabolism; phospholipid metabolism. Catalyzes the reversible formation of acyl-phosphate (acyl-PO(4)) from acyl-[acyl-carrier-protein] (acyl-ACP). This enzyme utilizes acyl-ACP as fatty acyl donor, but not acyl-CoA. This is Phosphate acyltransferase from Sphingopyxis alaskensis (strain DSM 13593 / LMG 18877 / RB2256) (Sphingomonas alaskensis).